The following is a 354-amino-acid chain: DNA repair protein rhp57 (354 aa).

100–107 (GESGSGKS) contacts ATP.

Belongs to the RecA family.

Its subcellular location is the nucleus. In terms of biological role, involved in recombination DNA repair and in the repair of gamma-ray-induced damage. This chain is DNA repair protein rhp57 (rhp57), found in Schizosaccharomyces pombe (strain 972 / ATCC 24843) (Fission yeast).